The following is a 189-amino-acid chain: Chitin synthase 1 (189 aa).

Belongs to the chitin synthase family. Class I subfamily.

The protein localises to the cell membrane. It carries out the reaction [(1-&gt;4)-N-acetyl-beta-D-glucosaminyl](n) + UDP-N-acetyl-alpha-D-glucosamine = [(1-&gt;4)-N-acetyl-beta-D-glucosaminyl](n+1) + UDP + H(+). Its function is as follows. Polymerizes chitin, a structural polymer of the cell wall and septum, by transferring the sugar moiety of UDP-GlcNAc to the non-reducing end of the growing chitin polymer. The sequence is that of Chitin synthase 1 (CHS1) from Ajellomyces capsulatus (Darling's disease fungus).